The chain runs to 464 residues: Argininosuccinate lyase (464 aa).

Belongs to the lyase 1 family. Argininosuccinate lyase subfamily.

The protein resides in the cytoplasm. It catalyses the reaction 2-(N(omega)-L-arginino)succinate = fumarate + L-arginine. It functions in the pathway amino-acid biosynthesis; L-arginine biosynthesis; L-arginine from L-ornithine and carbamoyl phosphate: step 3/3. The sequence is that of Argininosuccinate lyase from Crocosphaera subtropica (strain ATCC 51142 / BH68) (Cyanothece sp. (strain ATCC 51142)).